The sequence spans 492 residues: 3-octaprenyl-4-hydroxybenzoate carboxy-lyase (492 aa).

Residue Asn-177 participates in Mn(2+) binding. Prenylated FMN-binding positions include 180–182 (IYR), 194–196 (RWL), and 199–200 (RG). Glu-243 serves as a coordination point for Mn(2+). Asp-292 functions as the Proton donor in the catalytic mechanism.

This sequence belongs to the UbiD family. Homohexamer. Requires prenylated FMN as cofactor. Mn(2+) serves as cofactor.

It is found in the cell membrane. The enzyme catalyses a 4-hydroxy-3-(all-trans-polyprenyl)benzoate + H(+) = a 2-(all-trans-polyprenyl)phenol + CO2. It functions in the pathway cofactor biosynthesis; ubiquinone biosynthesis. Functionally, catalyzes the decarboxylation of 3-octaprenyl-4-hydroxy benzoate to 2-octaprenylphenol, an intermediate step in ubiquinone biosynthesis. The protein is 3-octaprenyl-4-hydroxybenzoate carboxy-lyase of Neisseria meningitidis serogroup A / serotype 4A (strain DSM 15465 / Z2491).